Reading from the N-terminus, the 236-residue chain is 2-C-methyl-D-erythritol 4-phosphate cytidylyltransferase (236 aa).

The protein belongs to the IspD/TarI cytidylyltransferase family. IspD subfamily. Homodimer.

The catalysed reaction is 2-C-methyl-D-erythritol 4-phosphate + CTP + H(+) = 4-CDP-2-C-methyl-D-erythritol + diphosphate. It participates in isoprenoid biosynthesis; isopentenyl diphosphate biosynthesis via DXP pathway; isopentenyl diphosphate from 1-deoxy-D-xylulose 5-phosphate: step 2/6. Catalyzes the formation of 4-diphosphocytidyl-2-C-methyl-D-erythritol from CTP and 2-C-methyl-D-erythritol 4-phosphate (MEP). This Salmonella schwarzengrund (strain CVM19633) protein is 2-C-methyl-D-erythritol 4-phosphate cytidylyltransferase.